We begin with the raw amino-acid sequence, 92 residues long: Small ribosomal subunit protein uS19 (92 aa).

The protein belongs to the universal ribosomal protein uS19 family.

Its function is as follows. Protein S19 forms a complex with S13 that binds strongly to the 16S ribosomal RNA. The sequence is that of Small ribosomal subunit protein uS19 from Ruegeria pomeroyi (strain ATCC 700808 / DSM 15171 / DSS-3) (Silicibacter pomeroyi).